Consider the following 274-residue polypeptide: NADPH-dependent 7-cyano-7-deazaguanine reductase (274 aa).

Position 80-82 (80-82) interacts with substrate; the sequence is VES. 82-83 lines the NADPH pocket; sequence SK. Cys-181 serves as the catalytic Thioimide intermediate. Asp-188 serves as the catalytic Proton donor. Residue 220–221 coordinates substrate; the sequence is HE. 249–250 lines the NADPH pocket; the sequence is RG.

This sequence belongs to the GTP cyclohydrolase I family. QueF type 2 subfamily. As to quaternary structure, homodimer.

The protein resides in the cytoplasm. It catalyses the reaction 7-aminomethyl-7-carbaguanine + 2 NADP(+) = 7-cyano-7-deazaguanine + 2 NADPH + 3 H(+). Its pathway is tRNA modification; tRNA-queuosine biosynthesis. In terms of biological role, catalyzes the NADPH-dependent reduction of 7-cyano-7-deazaguanine (preQ0) to 7-aminomethyl-7-deazaguanine (preQ1). The sequence is that of NADPH-dependent 7-cyano-7-deazaguanine reductase from Burkholderia multivorans (strain ATCC 17616 / 249).